We begin with the raw amino-acid sequence, 379 residues long: Cytochrome b (379 aa).

Transmembrane regions (helical) follow at residues 33–53 (FGSL…FLAM), 77–98 (WLIR…FIHV), 113–133 (WNIG…GYVL), and 178–198 (FFAF…VHLL). His-83 and His-97 together coordinate heme b. Heme b-binding residues include His-182 and His-196. His-201 is an a ubiquinone binding site. 4 consecutive transmembrane segments (helical) span residues 226 to 246 (TKDL…ALFF), 288 to 308 (LGGV…PLLN), 320 to 340 (VTQV…WIGG), and 347 to 367 (FTTI…ILIP).

It belongs to the cytochrome b family. In terms of assembly, the cytochrome bc1 complex contains 11 subunits: 3 respiratory subunits (MT-CYB, CYC1 and UQCRFS1), 2 core proteins (UQCRC1 and UQCRC2) and 6 low-molecular weight proteins (UQCRH/QCR6, UQCRB/QCR7, UQCRQ/QCR8, UQCR10/QCR9, UQCR11/QCR10 and a cleavage product of UQCRFS1). This cytochrome bc1 complex then forms a dimer. Heme b is required as a cofactor.

The protein localises to the mitochondrion inner membrane. Its function is as follows. Component of the ubiquinol-cytochrome c reductase complex (complex III or cytochrome b-c1 complex) that is part of the mitochondrial respiratory chain. The b-c1 complex mediates electron transfer from ubiquinol to cytochrome c. Contributes to the generation of a proton gradient across the mitochondrial membrane that is then used for ATP synthesis. In Akodon mystax (Caparao grass mouse), this protein is Cytochrome b (MT-CYB).